Reading from the N-terminus, the 194-residue chain is Erythropoietin (194 aa).

A signal peptide spans 1 to 26; it reads MGARECPARLLLLSLLLLPLGLPVLG. 2 disulfides stabilise this stretch: Cys33–Cys189 and Cys55–Cys59. Asn50 is a glycosylation site (N-linked (GlcNAc...) asparagine). N-linked (GlcNAc...) asparagine glycosylation is found at Asn64, Asn109, and Asn172.

This sequence belongs to the EPO/TPO family. As to expression, produced by kidney or liver of adult mammals and by liver of fetal or neonatal mammals.

It is found in the secreted. Hormone involved in the regulation of erythrocyte proliferation and differentiation and the maintenance of a physiological level of circulating erythrocyte mass. Binds to EPOR leading to EPOR dimerization and JAK2 activation thereby activating specific downstream effectors, including STAT1 and STAT3. The sequence is that of Erythropoietin (EPO) from Sus scrofa (Pig).